We begin with the raw amino-acid sequence, 157 residues long: Transcription elongation factor GreA (157 aa).

The tract at residues 1–60 (MEKVPMTSAGFAALGEELKKRQSEDRPRIIEHIAEARSHGDLSENAEYHAAKEEQSHNEG) is disordered. Residues 16 to 60 (EELKKRQSEDRPRIIEHIAEARSHGDLSENAEYHAAKEEQSHNEG) show a composition bias toward basic and acidic residues. A coiled-coil region spans residues 46 to 73 (AEYHAAKEEQSHNEGRIAELEDKLARAD).

The protein belongs to the GreA/GreB family.

In terms of biological role, necessary for efficient RNA polymerase transcription elongation past template-encoded arresting sites. The arresting sites in DNA have the property of trapping a certain fraction of elongating RNA polymerases that pass through, resulting in locked ternary complexes. Cleavage of the nascent transcript by cleavage factors such as GreA or GreB allows the resumption of elongation from the new 3'terminus. GreA releases sequences of 2 to 3 nucleotides. The protein is Transcription elongation factor GreA of Bradyrhizobium diazoefficiens (strain JCM 10833 / BCRC 13528 / IAM 13628 / NBRC 14792 / USDA 110).